Reading from the N-terminus, the 363-residue chain is Somatostatin receptor type 5 (363 aa).

Residues 1–35 (MEPLSLASTPSWNASAASSGNHNWSLVGSASPMGA) are Extracellular-facing. Asparagine 13 and asparagine 23 each carry an N-linked (GlcNAc...) asparagine glycan. A helical membrane pass occupies residues 36-63 (RAVLVPVLYLLVCTVGLSGNTLVIYVVL). The Cytoplasmic segment spans residues 64 to 73 (RHAKMKTVTN). The chain crosses the membrane as a helical span at residues 74–99 (VYILNLAVADVLFMLGLPFLATQNAV). At 100 to 111 (VSYWPFGSFLCR) the chain is on the extracellular side. Residues cysteine 110 and cysteine 185 are joined by a disulfide bond. A helical transmembrane segment spans residues 112-133 (LVMTLDGINQFTSIFCLMVMSV). At 134–155 (DRYLAVVHPLRSARWRRPRVAK) the chain is on the cytoplasmic side. Residues 156 to 176 (MASAAVWVFSLLMSLPLLVFA) form a helical membrane-spanning segment. The Extracellular portion of the chain corresponds to 177 to 196 (DVQEGWGTCNLSWPEPVGLW). Asparagine 186 carries N-linked (GlcNAc...) asparagine glycosylation. A helical membrane pass occupies residues 197–221 (GAAFITYTSVLGFFGPLLVICLCYL). At 222-247 (LIVVKVKAAGMRVGSSRRRRSEPKVT) the chain is on the cytoplasmic side. Residues 248–273 (RMVVVVVLVFVGCWLPFFIVNIVNLA) form a helical membrane-spanning segment. The Extracellular segment spans residues 274 to 283 (FTLPEEPTSA). A helical membrane pass occupies residues 284–308 (GLYFFVVVLSYANSCANPLLYGFLS). Topologically, residues 309–363 (DNFRQSFRKVLCLRRGYGMEDADAIEPRPDKSGRPQATLPTRSCEANGLMQTSRI) are cytoplasmic. Cysteine 320 carries S-palmitoyl cysteine; by ZDHHC5 lipidation. Residues 331-363 (DAIEPRPDKSGRPQATLPTRSCEANGLMQTSRI) are disordered.

It belongs to the G-protein coupled receptor 1 family. Heterodimer with SSTR2. Heterodimerization with SSTR2 increases cell growth inhibition activity of SSTR2. Post-translationally, palmitoylated at Cys-320 by ZDHHC5, but not ZDHHC8. Palmitoylation creates an additional intracellular loop which is thought to be important for efficient coupling to G-proteins and may target the protein to lipid rafts. Prominent in the pituitary and small intestine. Low levels in islets and spleen. Not detected in kidney, pancreas, cerebellum, or cortex.

Its subcellular location is the cell membrane. Functionally, receptor for somatostatin-28. The activity of this receptor is mediated by G proteins which inhibit adenylyl cyclase. Increases cell growth inhibition activity of SSTR2 following heterodimerization. This chain is Somatostatin receptor type 5 (Sstr5), found in Rattus norvegicus (Rat).